A 192-amino-acid polypeptide reads, in one-letter code: Protein GrpE (192 aa).

Over residues 1 to 20 the composition is skewed to basic and acidic residues; the sequence is MEERNEQVVEEVKEEVKEAQ. The disordered stretch occupies residues 1–39; that stretch reads MEERNEQVVEEVKEEVKEAQVEEAVTSEDSEESVEEKSE. Over residues 25 to 34 the composition is skewed to acidic residues; sequence VTSEDSEESV.

The protein belongs to the GrpE family. In terms of assembly, homodimer.

The protein resides in the cytoplasm. Functionally, participates actively in the response to hyperosmotic and heat shock by preventing the aggregation of stress-denatured proteins, in association with DnaK and GrpE. It is the nucleotide exchange factor for DnaK and may function as a thermosensor. Unfolded proteins bind initially to DnaJ; upon interaction with the DnaJ-bound protein, DnaK hydrolyzes its bound ATP, resulting in the formation of a stable complex. GrpE releases ADP from DnaK; ATP binding to DnaK triggers the release of the substrate protein, thus completing the reaction cycle. Several rounds of ATP-dependent interactions between DnaJ, DnaK and GrpE are required for fully efficient folding. This is Protein GrpE from Bacillus cereus (strain ATCC 10987 / NRS 248).